A 305-amino-acid chain; its full sequence is Ribonuclease BN (305 aa).

Zn(2+)-binding residues include His63, His65, Asp67, His68, His141, Asp212, and His270. Residue Asp67 is the Proton acceptor of the active site.

The protein belongs to the RNase Z family. RNase BN subfamily. As to quaternary structure, homodimer. Zn(2+) serves as cofactor.

In terms of biological role, zinc phosphodiesterase, which has both exoribonuclease and endoribonuclease activities. This chain is Ribonuclease BN, found in Proteus mirabilis (strain HI4320).